A 355-amino-acid chain; its full sequence is Arginine kinase (355 aa).

Residues 8–90 (KLQAGFKKLE…FDPIIEDYHV (83 aa)) form the Phosphagen kinase N-terminal domain. 63–67 (GVGIY) provides a ligand contact to L-arginine. In terms of domain architecture, Phosphagen kinase C-terminal spans 118 to 355 (YVISTRVRCG…LQLIKMEKEM (238 aa)). ATP-binding positions include 121 to 125 (STRVR) and histidine 184. Glutamate 224 provides a ligand contact to L-arginine. Arginine 228 provides a ligand contact to ATP. Cysteine 270 contacts L-arginine. ATP-binding positions include 279 to 283 (RASVH) and 308 to 313 (RGTRGE). Glutamate 313 serves as a coordination point for L-arginine.

Belongs to the ATP:guanido phosphotransferase family. Monomer.

The enzyme catalyses L-arginine + ATP = N(omega)-phospho-L-arginine + ADP + H(+). The chain is Arginine kinase from Penaeus japonicus (Kuruma prawn).